We begin with the raw amino-acid sequence, 310 residues long: Isoflavone reductase homolog A622-like (310 aa).

NADP(+)-binding positions include 13–19 (GGTGYIG), Arg38, and Lys47. Residue Lys135 is the Proton acceptor of the active site. Arg139 is an NADP(+) binding site.

This sequence belongs to the NmrA-type oxidoreductase family. Isoflavone reductase subfamily. In terms of assembly, monomer. As to expression, expressed in roots.

It is found in the cytoplasm. It functions in the pathway alkaloid biosynthesis; nicotine biosynthesis. Involved in the biosynthesis of pyridine alkaloid natural products, leading mainly to the production of anabasine, anatabine, nicotine and nornicotine, effective deterrents against herbivores with antiparasitic and pesticide properties (neurotoxins); nornicotine serves as the precursor in the synthesis of the carcinogen compound N'-nitrosonornicotine (NNN). Reductase that may be involved in a late step of tobacco alkaloid biosynthesis. Maybe involved in either the formation of a nicotinic acid-derived precursor or the final condensation reaction of tobacco alkaloids. In Nicotiana tabacum (Common tobacco), this protein is Isoflavone reductase homolog A622-like.